The sequence spans 156 residues: Cell division protein SepF (156 aa).

Positions 17–44 are disordered; sequence PETADYYEDQQPAQQAPAPVPTPAPTRS.

It belongs to the SepF family. Homodimer. Interacts with FtsZ.

Its subcellular location is the cytoplasm. Functionally, cell division protein that is part of the divisome complex and is recruited early to the Z-ring. Probably stimulates Z-ring formation, perhaps through the cross-linking of FtsZ protofilaments. Its function overlaps with FtsA. This is Cell division protein SepF from Limosilactobacillus fermentum (strain NBRC 3956 / LMG 18251) (Lactobacillus fermentum).